Here is a 1270-residue protein sequence, read N- to C-terminus: MSSNTVNQRVNFASTKNPLEYPDFLEVQLKSFQDFLQLDTPPEKRKKEGLYKVFAENFPIADTRNNFVLEFLDYYIDPPRYTIDDCIERGLTYSVPLKAKLKLYCTDPDHEDFDTVIQDVFLGPIPYMTDKATFVINGAERVVVSQLHRSPGVFFGQSVHANGTKLYSARIIPFKGSWIEFATDINNVMYAYIDRKKKLPVTTLLRAIGFENDKDILEIFNLAEDVKVNKTNLKKVVGRKLAARVLKTWIEDFVDEDTGEVVSIERNEVIIDRETVIEPEHIDEIIDSGVQNILIHKEEPNQSDYSIIYNTLQKDPSNSEKEAVLYIYRQLRNADPADDASAREVINNLFFSEKRYDLGDVGRYRINKKLNLTTDMDVRVLTKEDIIEIIKYLIELINSKADVDDIDHLSNRRVRTVGEQLSNQFAVGLARMSRTIRERMNVRDNEVFTPIDLINAKTISSVINSFFGTNALSQFMDQTNPLAEITHKRRMSALGPGGLSRERAGFEVRDVHYTHYGRLCPIETPEGPNIGLISSLCVFAKINDLGFIETPYRKVDNGKVDLSENGLVYLTAEEEEAKIIAQGNAPLNDDGTFIRNKVKSRQDADYPVVEPSEVELMDVAPQQIASIAASLIPFLEHDDANRALMGSNMMRQAVPLLRSEAPIVGTGIERQLVRDSRTQIAAEGDGVIDFVDATTIRILYDRTEDEEFVSFEPALKEYRIPKFRKTNQNMTIDLRPTCNKGDRVTKGQILTEGYSTENGELALGKNLLVAYMPWKGYNYEDAIVLNERVVREDLLTSVHVEEYSLEVRETKRGMEELTSDIPNVSEEATKDLDENGIVRVGARIQPGDILIGKITPKGESDPSPEEKLLRAIFGDKAGDVKDASLKASPSLKGVIIDKKLFSRVIKNRSSKLADKALLPKIDDEFESKVADLKRILVKKLMVLTEGKVSQGVKDYLGAEVIAKGSKFSASDFDSLDFTAIQLSDWTNDDHANGMIRDLILNFIKKYKELDAELKRKKFAITIGDELPAGIIQMAKVYIAKKRKIGVGDKMAGRHGNKGIVSRVVRQEDMPFLEDGTPVDIVLNPLGVPSRMNIGQIFEAVLGRAGKNLGVKFATPIFDGATLDDLNEWTDKAGLPRYCKTYLCDGGTGERFDQPATVGVTYMLKLGHMVEDKMHARSIGPYSLITQQPLGGKAQFGGQRFGEMEVWALEGFGASHILQEILTIKSDDVVGRSKAYEAIVKGEPMPQPGIPESLNVLLHELRGLGLSINLE.

It belongs to the RNA polymerase beta chain family. In terms of assembly, the RNAP catalytic core consists of 2 alpha, 1 beta, 1 beta' and 1 omega subunit. When a sigma factor is associated with the core the holoenzyme is formed, which can initiate transcription.

The enzyme catalyses RNA(n) + a ribonucleoside 5'-triphosphate = RNA(n+1) + diphosphate. Its function is as follows. DNA-dependent RNA polymerase catalyzes the transcription of DNA into RNA using the four ribonucleoside triphosphates as substrates. This chain is DNA-directed RNA polymerase subunit beta, found in Bacteroides fragilis (strain ATCC 25285 / DSM 2151 / CCUG 4856 / JCM 11019 / LMG 10263 / NCTC 9343 / Onslow / VPI 2553 / EN-2).